Consider the following 411-residue polypeptide: Alpha-galactosidase (411 aa).

Residues Met1–Gly24 form the signal peptide. Positions Gly25–Leu47 are excised as a propeptide. N-linked (GlcNAc...) asparagine glycosylation occurs at Asn32. An intrachain disulfide couples Cys68 to Cys100. Asn145 carries an N-linked (GlcNAc...) asparagine glycan. Cys148 and Cys179 form a disulfide bridge. Residue Asp177 is the Nucleophile of the active site. Glu210–Glu214 serves as a coordination point for substrate. Asp232 functions as the Proton donor in the catalytic mechanism. An N-linked (GlcNAc...) asparagine glycan is attached at Asn352.

The protein belongs to the glycosyl hydrolase 27 family.

The catalysed reaction is Hydrolysis of terminal, non-reducing alpha-D-galactose residues in alpha-D-galactosides, including galactose oligosaccharides, galactomannans and galactolipids.. Functionally, involved in the hydrolysis of the galactomannan, it splits alpha-linked galactose moieties. It is particularly suitable for the hydrolysis of guar gum to a gum with improved gelling properties. Preferentially cleaves alpha-1,6 glycoside linkages. The polypeptide is Alpha-galactosidase (Cyamopsis tetragonoloba (Guar)).